An 88-amino-acid chain; its full sequence is Small ribosomal subunit protein uS15 (88 aa).

This sequence belongs to the universal ribosomal protein uS15 family. As to quaternary structure, part of the 30S ribosomal subunit. Forms a bridge to the 50S subunit in the 70S ribosome, contacting the 23S rRNA.

Functionally, one of the primary rRNA binding proteins, it binds directly to 16S rRNA where it helps nucleate assembly of the platform of the 30S subunit by binding and bridging several RNA helices of the 16S rRNA. Forms an intersubunit bridge (bridge B4) with the 23S rRNA of the 50S subunit in the ribosome. This is Small ribosomal subunit protein uS15 from Flavobacterium psychrophilum (strain ATCC 49511 / DSM 21280 / CIP 103535 / JIP02/86).